Here is a 201-residue protein sequence, read N- to C-terminus: Heat shock protein beta-1 (201 aa).

Phosphoserine; by PKA and PKC is present on Ser15. Residues Ala83–Glu193 form the sHSP domain.

This sequence belongs to the small heat shock protein (HSP20) family. Homooligomer. Homodimer; becomes monomeric upon activation. Heterooligomer.

The protein resides in the cytoplasm. It is found in the nucleus. Its subcellular location is the cytoskeleton. It localises to the spindle. Small heat shock protein which functions as a molecular chaperone probably maintaining denatured proteins in a folding-competent state. Plays a role in stress resistance and actin organization. The protein is Heat shock protein beta-1 (hspb1) of Poeciliopsis lucida (Desert topminnow).